The sequence spans 594 residues: Acyl-coenzyme A thioesterase 11 (594 aa).

The transit peptide at Met-1–Arg-20 directs the protein to the mitochondrion. 2 positions are modified to phosphoserine: Ser-15 and Ser-25. A disordered region spans residues Arg-20–Tyr-43. The 113-residue stretch at Asn-45–Leu-157 folds into the HotDog ACOT-type 1 domain. CoA-binding positions include Thr-93–Ser-95, Asn-122–Ser-124, Arg-183, and His-272–Arg-274. The HotDog ACOT-type 2 domain maps to Glu-217 to Asp-330. The 213-residue stretch at Lys-370–Asp-582 folds into the START domain.

The protein resides in the mitochondrion matrix. Its subcellular location is the cytoplasm. The catalysed reaction is hexadecanoyl-CoA + H2O = hexadecanoate + CoA + H(+). It carries out the reaction tetradecanoyl-CoA + H2O = tetradecanoate + CoA + H(+). It catalyses the reaction dodecanoyl-CoA + H2O = dodecanoate + CoA + H(+). The enzyme catalyses butanoyl-CoA + H2O = butanoate + CoA + H(+). It participates in lipid metabolism; fatty acid metabolism. In terms of biological role, has an acyl-CoA thioesterase activity with a preference for the long chain fatty acyl-CoA thioesters hexadecanoyl-CoA/palmitoyl-CoA and tetradecanoyl-CoA/myristoyl-CoA which are the main substrates in the mitochondrial beta-oxidation pathway. This Mus musculus (Mouse) protein is Acyl-coenzyme A thioesterase 11 (Acot11).